Consider the following 267-residue polypeptide: uncharacterized protein (267 aa).

The disordered stretch occupies residues 72-267 (LTENNNNNNT…EEKKKKKKKK (196 aa)). Positions 122-145 (DSVSSSTTTTIITNNKKINNNNNN) are enriched in low complexity. Over residues 159 to 175 (ENEKSVQKSKKEKESPK) the composition is skewed to basic and acidic residues. Positions 194–218 (SESSSSSSSSSSSESSSSESESSSS) are enriched in low complexity.

This is an uncharacterized protein from Dictyostelium discoideum (Social amoeba).